Here is an 85-residue protein sequence, read N- to C-terminus: Large ribosomal subunit protein bL27 (85 aa).

The segment at methionine 1–glycine 22 is disordered. Positions alanine 7–glutamine 19 are enriched in polar residues.

This sequence belongs to the bacterial ribosomal protein bL27 family.

This is Large ribosomal subunit protein bL27 from Leifsonia xyli subsp. xyli (strain CTCB07).